Here is a 621-residue protein sequence, read N- to C-terminus: Chaperone protein HscA homolog (621 aa).

It belongs to the heat shock protein 70 family.

Its function is as follows. Chaperone involved in the maturation of iron-sulfur cluster-containing proteins. Has a low intrinsic ATPase activity which is markedly stimulated by HscB. This chain is Chaperone protein HscA homolog, found in Ralstonia pickettii (strain 12J).